The chain runs to 62 residues: UPF0434 protein ASA_1553 (62 aa).

This sequence belongs to the UPF0434 family.

In Aeromonas salmonicida (strain A449), this protein is UPF0434 protein ASA_1553.